A 1337-amino-acid polypeptide reads, in one-letter code: DNA-directed RNA polymerase subunit beta' (1337 aa).

Zn(2+)-binding residues include cysteine 60, cysteine 62, cysteine 75, and cysteine 78. 3 residues coordinate Mg(2+): aspartate 536, aspartate 538, and aspartate 540. Zn(2+) contacts are provided by cysteine 895, cysteine 974, cysteine 981, and cysteine 984.

Belongs to the RNA polymerase beta' chain family. In terms of assembly, the RNAP catalytic core consists of 2 alpha, 1 beta, 1 beta' and 1 omega subunit. When a sigma factor is associated with the core the holoenzyme is formed, which can initiate transcription. The cofactor is Mg(2+). It depends on Zn(2+) as a cofactor.

It carries out the reaction RNA(n) + a ribonucleoside 5'-triphosphate = RNA(n+1) + diphosphate. In terms of biological role, DNA-dependent RNA polymerase catalyzes the transcription of DNA into RNA using the four ribonucleoside triphosphates as substrates. This is DNA-directed RNA polymerase subunit beta' from Bifidobacterium adolescentis (strain ATCC 15703 / DSM 20083 / NCTC 11814 / E194a).